We begin with the raw amino-acid sequence, 362 residues long: 3-dehydroquinate synthase (362 aa).

Residues 72–77 (SGEEAK), 106–110 (GVTGD), 130–131 (TT), Lys-142, and Lys-151 each bind NAD(+). Residues Glu-184, His-246, and His-263 each coordinate Zn(2+).

The protein belongs to the sugar phosphate cyclases superfamily. Dehydroquinate synthase family. It depends on Co(2+) as a cofactor. Requires Zn(2+) as cofactor. The cofactor is NAD(+).

It is found in the cytoplasm. It catalyses the reaction 7-phospho-2-dehydro-3-deoxy-D-arabino-heptonate = 3-dehydroquinate + phosphate. Its pathway is metabolic intermediate biosynthesis; chorismate biosynthesis; chorismate from D-erythrose 4-phosphate and phosphoenolpyruvate: step 2/7. In terms of biological role, catalyzes the conversion of 3-deoxy-D-arabino-heptulosonate 7-phosphate (DAHP) to dehydroquinate (DHQ). The chain is 3-dehydroquinate synthase from Bacillus velezensis (strain DSM 23117 / BGSC 10A6 / LMG 26770 / FZB42) (Bacillus amyloliquefaciens subsp. plantarum).